The chain runs to 104 residues: MNDTEFHQLVDAQMQIIEESIDDSGADIDYEVSGNVMTLEFEDRSQIIINRQEPMHEIWLASKSGGFHFKLVEDKWTCSKTGMELFEMVKQECEKHAGEEIDWA.

Belongs to the frataxin family.

Its function is as follows. Involved in iron-sulfur (Fe-S) cluster assembly. May act as a regulator of Fe-S biogenesis. This is Iron-sulfur cluster assembly protein CyaY from Vibrio parahaemolyticus serotype O3:K6 (strain RIMD 2210633).